Reading from the N-terminus, the 181-residue chain is Adenine phosphoribosyltransferase (181 aa).

The protein belongs to the purine/pyrimidine phosphoribosyltransferase family. As to quaternary structure, homodimer.

It localises to the cytoplasm. The enzyme catalyses AMP + diphosphate = 5-phospho-alpha-D-ribose 1-diphosphate + adenine. The protein operates within purine metabolism; AMP biosynthesis via salvage pathway; AMP from adenine: step 1/1. Its function is as follows. Catalyzes a salvage reaction resulting in the formation of AMP, that is energically less costly than de novo synthesis. The protein is Adenine phosphoribosyltransferase of Acidobacterium capsulatum (strain ATCC 51196 / DSM 11244 / BCRC 80197 / JCM 7670 / NBRC 15755 / NCIMB 13165 / 161).